We begin with the raw amino-acid sequence, 240 residues long: uncharacterized protein (240 aa).

Helical transmembrane passes span 16–36 (AVFF…YFIP) and 67–87 (FITA…VIAM).

The protein resides in the cell membrane. This is an uncharacterized protein from Bacillus subtilis (strain 168).